A 916-amino-acid polypeptide reads, in one-letter code: Isoleucine--tRNA ligase (916 aa).

The short motif at 57 to 67 (PYANGNLHMGH) is the 'HIGH' region element. Glu554 serves as a coordination point for L-isoleucyl-5'-AMP. Residues 595-599 (KMSKS) carry the 'KMSKS' region motif. Lys598 provides a ligand contact to ATP. Positions 885, 888, 905, and 908 each coordinate Zn(2+).

Belongs to the class-I aminoacyl-tRNA synthetase family. IleS type 1 subfamily. Monomer. Zn(2+) is required as a cofactor.

Its subcellular location is the cytoplasm. It catalyses the reaction tRNA(Ile) + L-isoleucine + ATP = L-isoleucyl-tRNA(Ile) + AMP + diphosphate. Functionally, catalyzes the attachment of isoleucine to tRNA(Ile). As IleRS can inadvertently accommodate and process structurally similar amino acids such as valine, to avoid such errors it has two additional distinct tRNA(Ile)-dependent editing activities. One activity is designated as 'pretransfer' editing and involves the hydrolysis of activated Val-AMP. The other activity is designated 'posttransfer' editing and involves deacylation of mischarged Val-tRNA(Ile). The polypeptide is Isoleucine--tRNA ligase (Staphylococcus haemolyticus (strain JCSC1435)).